The following is an 833-amino-acid chain: DNA polymerase I, thermostable (833 aa).

A 5'-3' exonuclease domain is found at 173 to 267 (VPPERWVDFR…FKALRRRTPD (95 aa)). The tract at residues 412-833 (ERLFQNLFPR…GRDWLEAKQD (422 aa)) is polymerase.

The protein belongs to the DNA polymerase type-A family.

It catalyses the reaction DNA(n) + a 2'-deoxyribonucleoside 5'-triphosphate = DNA(n+1) + diphosphate. Its function is as follows. In addition to polymerase activity, this DNA polymerase exhibits 5'-3' exonuclease activity. Unlikely to have 3'-5' exonuclease activity due to absence of a 3'-5' exonuclease domain. This is DNA polymerase I, thermostable (polA) from Thermus filiformis.